The primary structure comprises 525 residues: Peptide chain release factor 3 (525 aa).

In terms of domain architecture, tr-type G spans 9–276; the sequence is AKRRTFAIIS…GFTRYAPAPQ (268 aa). GTP-binding positions include 18-25, 86-90, and 140-143; these read SHPDAGKT, DTPGH, and NKFD.

Belongs to the TRAFAC class translation factor GTPase superfamily. Classic translation factor GTPase family. PrfC subfamily.

It is found in the cytoplasm. Functionally, increases the formation of ribosomal termination complexes and stimulates activities of RF-1 and RF-2. It binds guanine nucleotides and has strong preference for UGA stop codons. It may interact directly with the ribosome. The stimulation of RF-1 and RF-2 is significantly reduced by GTP and GDP, but not by GMP. The polypeptide is Peptide chain release factor 3 (Francisella tularensis subsp. tularensis (strain FSC 198)).